Consider the following 817-residue polypeptide: Alpha-bisabolene synthase (817 aa).

The Mg(2+) site is built by D566, D570, D713, T717, and E721. A DDXXD motif motif is present at residues 566–570; the sequence is DDMYD.

The protein belongs to the terpene synthase family. Tpsd subfamily. It depends on Mg(2+) as a cofactor. Requires Mn(2+) as cofactor. K(+) is required as a cofactor.

It is found in the cytoplasm. It carries out the reaction (2E,6E)-farnesyl diphosphate = (E,R)-alpha-bisabolene + diphosphate. Its pathway is terpene metabolism; oleoresin biosynthesis. Its function is as follows. Converts farnesyl diphosphate to alpha-bisabolene. Involved in defensive oleoresin formation in conifers in response to insect attack or other injury. Involved in sesquiterpene (C15) olefins biosynthesis. This is Alpha-bisabolene synthase (ag1) from Abies grandis (Grand fir).